The primary structure comprises 434 residues: Polyadenylate-binding protein RBP47C' (434 aa).

The disordered stretch occupies residues 1–50 (MADVKVQSESESSDSHPLVDYQSLPPYPPPHPPVEVEENQPKTSPTPPPP). 3 consecutive RRM domains span residues 103–185 (KTIW…WASF), 199–278 (LSIF…PATP), and 306–378 (TTIF…WGRN).

The protein belongs to the polyadenylate-binding RBP47 family. As to quaternary structure, interacts with the poly(A) tail of mRNA in nucleus.

The protein resides in the nucleus. It is found in the cytoplasmic granule. Its function is as follows. Heterogeneous nuclear ribonucleoprotein (hnRNP)-protein binding the poly(A) tail of mRNA and probably involved in some steps of pre-mRNA maturation. The polypeptide is Polyadenylate-binding protein RBP47C' (RBP47C') (Arabidopsis thaliana (Mouse-ear cress)).